An 868-amino-acid polypeptide reads, in one-letter code: MSKSLVIVESPAKAKTINKYLGSNYVVKSSVGHIRDLPTVGSSNGEKAKAISTKGLSAEEKSAIKQEKDRNALVKRMGIDPYHQWKANYQILPGKEKVVAELKSLAKKADHIYLATDLDREGEAIAWHLREVIGGDDARFSRVVFNEITKNAIQQAFEKPEQLNLDRVNAQQTRRFLDRVVGFMVSPLLWKKVARGLSAGRVQSVAVKLVVEREREIKAFQPEEYWEIDVLTQTQAKQALRLAVTQFKGKKFEPKNATQAQSAVDFLQHADYVVSDLETKPTHSRAKAPFITSTLQQTASTRLGFGVKKTMMLAQRLYEAGYITYMRTDSTNLSQDALKMVRGYIQSHYGESYLPSKPVFYSSKENAQEAHEAIRPSDVNTLAEQLTGMDKDAVRLYDLIWRQFVACQMPAAQYDSTTVTVRAGEYELKAKGRILRFDGWTKVLPTMSKNAEDQVLPDVQLNEKLHLEHVLPEQLFTKPPARFSEAALVKELEKRGIGRPSTYAAIISTIQERGYVRVENRRFYAEKMGEIVTDRLNQSFTALMNYDFTANMENILDQIANGEKNWKTELNQFFKDFSQQLSQAELDELEGGMKPNSLVPTDINCPTCGRKMAIRTASTGVFLGCSGYALPPKERCKTTMNLIPEAELLNVLDEASETKALMERKRCPKCGTAMDSYLIDPERKIHICGHNPNCDGYVLEQGSFKIKGYDGPIVECDKCGADMHLKLGRFGKYMGCTSCDNTRKILKSGEVAPPKEEPTHFPELKCEKSDAYFVLRDGASGVFMSAHNFPKSRETRAPKVAELALYRDRLPEKLRYLADAPQHDPEGNDAIVRFSRKEKRQYVTSEKNGKATKWIVDYLGNQWVERKK.

Residues 3 to 148 form the Toprim domain; that stretch reads KSLVIVESPA…RFSRVVFNEI (146 aa). The Mg(2+) site is built by glutamate 9 and aspartate 117. Residues 164–581 form the Topo IA-type catalytic domain; sequence NLDRVNAQQT…QFFKDFSQQL (418 aa). Residues 198–203 are interaction with DNA; sequence SAGRVQ. The active-site O-(5'-phospho-DNA)-tyrosine intermediate is tyrosine 325. C4-type zinc fingers lie at residues 605–636, 667–694, and 716–739; these read CPTC…KERC, CPKC…NPNC, and CDKC…CTSC.

It belongs to the type IA topoisomerase family. Monomer. The cofactor is Mg(2+).

It catalyses the reaction ATP-independent breakage of single-stranded DNA, followed by passage and rejoining.. Functionally, releases the supercoiling and torsional tension of DNA, which is introduced during the DNA replication and transcription, by transiently cleaving and rejoining one strand of the DNA duplex. Introduces a single-strand break via transesterification at a target site in duplex DNA. The scissile phosphodiester is attacked by the catalytic tyrosine of the enzyme, resulting in the formation of a DNA-(5'-phosphotyrosyl)-enzyme intermediate and the expulsion of a 3'-OH DNA strand. The free DNA strand then undergoes passage around the unbroken strand, thus removing DNA supercoils. Finally, in the religation step, the DNA 3'-OH attacks the covalent intermediate to expel the active-site tyrosine and restore the DNA phosphodiester backbone. In Pasteurella multocida (strain Pm70), this protein is DNA topoisomerase 1.